A 419-amino-acid chain; its full sequence is UDP-N-acetylglucosamine 1-carboxyvinyltransferase (419 aa).

22–23 (KN) lines the phosphoenolpyruvate pocket. Arginine 95 lines the UDP-N-acetyl-alpha-D-glucosamine pocket. Cysteine 119 serves as the catalytic Proton donor. Residue cysteine 119 is modified to 2-(S-cysteinyl)pyruvic acid O-phosphothioketal. UDP-N-acetyl-alpha-D-glucosamine is bound by residues 164–167 (KVSV), aspartate 308, and isoleucine 330.

It belongs to the EPSP synthase family. MurA subfamily.

The protein resides in the cytoplasm. The catalysed reaction is phosphoenolpyruvate + UDP-N-acetyl-alpha-D-glucosamine = UDP-N-acetyl-3-O-(1-carboxyvinyl)-alpha-D-glucosamine + phosphate. It participates in cell wall biogenesis; peptidoglycan biosynthesis. Cell wall formation. Adds enolpyruvyl to UDP-N-acetylglucosamine. The protein is UDP-N-acetylglucosamine 1-carboxyvinyltransferase of Rickettsia prowazekii (strain Madrid E).